The following is a 162-amino-acid chain: Phosphopantetheine adenylyltransferase (162 aa).

Residue Thr9 participates in substrate binding. Residues Thr9–Phe10 and His17 each bind ATP. 3 residues coordinate substrate: Lys41, Leu76, and Arg90. Residues Gly91–Arg93, Glu101, and His126–Arg132 contribute to the ATP site.

This sequence belongs to the bacterial CoaD family. In terms of assembly, homohexamer. Requires Mg(2+) as cofactor.

It is found in the cytoplasm. It carries out the reaction (R)-4'-phosphopantetheine + ATP + H(+) = 3'-dephospho-CoA + diphosphate. The protein operates within cofactor biosynthesis; coenzyme A biosynthesis; CoA from (R)-pantothenate: step 4/5. Reversibly transfers an adenylyl group from ATP to 4'-phosphopantetheine, yielding dephospho-CoA (dPCoA) and pyrophosphate. The polypeptide is Phosphopantetheine adenylyltransferase (Caulobacter sp. (strain K31)).